We begin with the raw amino-acid sequence, 260 residues long: Acyl-[acyl-carrier-protein]--UDP-N-acetylglucosamine O-acyltransferase (260 aa).

The protein belongs to the transferase hexapeptide repeat family. LpxA subfamily. In terms of assembly, homotrimer.

The protein localises to the cytoplasm. It catalyses the reaction a (3R)-hydroxyacyl-[ACP] + UDP-N-acetyl-alpha-D-glucosamine = a UDP-3-O-[(3R)-3-hydroxyacyl]-N-acetyl-alpha-D-glucosamine + holo-[ACP]. The protein operates within glycolipid biosynthesis; lipid IV(A) biosynthesis; lipid IV(A) from (3R)-3-hydroxytetradecanoyl-[acyl-carrier-protein] and UDP-N-acetyl-alpha-D-glucosamine: step 1/6. Functionally, involved in the biosynthesis of lipid A, a phosphorylated glycolipid that anchors the lipopolysaccharide to the outer membrane of the cell. This is Acyl-[acyl-carrier-protein]--UDP-N-acetylglucosamine O-acyltransferase from Aliarcobacter butzleri (strain RM4018) (Arcobacter butzleri).